The sequence spans 223 residues: Putative UPF0607 protein LOC392364 (223 aa).

The segment covering 110 to 138 (KMEVRAEEPKEATEVKDQVETQEQEDNKR) has biased composition (basic and acidic residues). The interval 110–223 (KMEVRAEEPK…GRTPPARQHG (114 aa)) is disordered. Polar residues-rich tracts occupy residues 145-163 (EAAS…TSPR) and 174-186 (QLKS…QTDK).

The protein belongs to the UPF0607 family.

In Homo sapiens (Human), this protein is Putative UPF0607 protein LOC392364.